We begin with the raw amino-acid sequence, 163 residues long: Peptide deformylase (163 aa).

The Fe cation site is built by Cys-91 and His-133. Residue Glu-134 is part of the active site. His-137 contributes to the Fe cation binding site.

It belongs to the polypeptide deformylase family. Fe(2+) is required as a cofactor.

The catalysed reaction is N-terminal N-formyl-L-methionyl-[peptide] + H2O = N-terminal L-methionyl-[peptide] + formate. Removes the formyl group from the N-terminal Met of newly synthesized proteins. Requires at least a dipeptide for an efficient rate of reaction. N-terminal L-methionine is a prerequisite for activity but the enzyme has broad specificity at other positions. The protein is Peptide deformylase of Lachnoclostridium phytofermentans (strain ATCC 700394 / DSM 18823 / ISDg) (Clostridium phytofermentans).